The sequence spans 586 residues: Heterogeneous nuclear ribonucleoprotein L (586 aa).

Over residues 1 to 16 (MSRRLLPRAEKRRRRL) the composition is skewed to basic residues. A disordered region spans residues 1-97 (MSRRLLPRAE…NYDDPHKTPA (97 aa)). Over residues 17–27 (EQRQQPDEQLR) the composition is skewed to basic and acidic residues. Low complexity predominate over residues 28–37 (RAGAMVKMAA). Over residues 38-54 (AGGGGGGGRYYGGGNEG) the composition is skewed to gly residues. Glycyl lysine isopeptide (Lys-Gly) (interchain with G-Cter in SUMO2) cross-links involve residues K59 and K62. The span at 69–87 (QHGGGGGGGSGAAGGGGGE) shows a compositional bias: gly residues. S98 bears the Phosphoserine mark. The 75-residue stretch at 99 to 173 (PVVHIRGLID…HPAFVNYSTS (75 aa)) folds into the RRM 1 domain. A Glycyl lysine isopeptide (Lys-Gly) (interchain with G-Cter in SUMO2) cross-link involves residue K133. S182 bears the Phosphoserine mark. Residues 190–267 (SVLLFTILNP…CTLKIEYAKP (78 aa)) form the RRM 2 domain. Position 266 is an N6-acetyllysine (K266). The segment covering 281 to 298 (DYTNPNLSGQGDPGSNPN) has biased composition (polar residues). Residues 281 to 376 (DYTNPNLSGQ…PPPPDYGPHA (96 aa)) form a disordered region. Phosphoserine is present on residues S288 and S295. K299 is covalently cross-linked (Glycyl lysine isopeptide (Lys-Gly) (interchain with G-Cter in SUMO2)). 2 positions are modified to asymmetric dimethylarginine: R351 and R355. Pro residues predominate over residues 361–372 (GHPPPPPPPPDY). The residue at position 378 (S378) is a Phosphoserine. 2 RRM domains span residues 379 to 476 (PVLM…DFSE) and 492 to 580 (RIQH…LCFS). At S541 the chain carries Phosphoserine; by CaMK4. A Glycyl lysine isopeptide (Lys-Gly) (interchain with G-Cter in SUMO2) cross-link involves residue K565.

In terms of assembly, identified in a IGF2BP1-dependent mRNP granule complex containing untranslated mRNAs. Interacts with HNRNPLL. Interacts with APEX1; the interaction is DNA-dependent. Component of a complex with SETD2. Interacts with ELAVL1. Part of a transcription inhibitory ribonucleoprotein complex composed at least of the circular RNA circZNF827, ZNF827 and HNRNPK. Interacts with CHD8 in an RNA-dependent manner. Phosphorylation at Ser-541 by CaMK4 enhances interaction with a CaMK4-responsive RNA element (CaRRE1), and prevents inclusion of the stress axis-regulated exon (STREX) of the KCNMA1 potassium channel transcripts upon membrane depolarization. As to expression, detected in hematopoietic cells, including lymphoid progenitor cells.

Its subcellular location is the nucleus. It localises to the nucleoplasm. The protein localises to the cytoplasm. In terms of biological role, splicing factor binding to exonic or intronic sites and acting as either an activator or repressor of exon inclusion. Exhibits a binding preference for CA-rich elements. Component of the heterogeneous nuclear ribonucleoprotein (hnRNP) complexes and associated with most nascent transcripts. Associates, together with APEX1, to the negative calcium responsive element (nCaRE) B2 of the APEX2 promoter. As part of a ribonucleoprotein complex composed at least of ZNF827, HNRNPK and the circular RNA circZNF827 that nucleates the complex on chromatin, may negatively regulate the transcription of genes involved in neuronal differentiation. Regulates alternative splicing of a core group of genes involved in neuronal differentiation, likely by mediating H3K36me3-coupled transcription elongation and co-transcriptional RNA processing via interaction with CHD8. In Mus musculus (Mouse), this protein is Heterogeneous nuclear ribonucleoprotein L (Hnrnpl).